A 262-amino-acid chain; its full sequence is 3-deoxy-manno-octulosonate cytidylyltransferase (262 aa).

It belongs to the KdsB family.

The protein resides in the cytoplasm. The catalysed reaction is 3-deoxy-alpha-D-manno-oct-2-ulosonate + CTP = CMP-3-deoxy-beta-D-manno-octulosonate + diphosphate. Its pathway is nucleotide-sugar biosynthesis; CMP-3-deoxy-D-manno-octulosonate biosynthesis; CMP-3-deoxy-D-manno-octulosonate from 3-deoxy-D-manno-octulosonate and CTP: step 1/1. It participates in bacterial outer membrane biogenesis; lipopolysaccharide biosynthesis. Its function is as follows. Activates KDO (a required 8-carbon sugar) for incorporation into bacterial lipopolysaccharide in Gram-negative bacteria. The sequence is that of 3-deoxy-manno-octulosonate cytidylyltransferase from Acidovorax ebreus (strain TPSY) (Diaphorobacter sp. (strain TPSY)).